Consider the following 937-residue polypeptide: Protocadherin alpha-7 (937 aa).

Residues 1-29 (MVNLRGYNWKSQQLLLFLIIVAAWEAGSG) form the signal peptide. Topologically, residues 30-697 (QLHYSVPEEA…RVDQRLVDVN (668 aa)) are extracellular. 6 Cadherin domains span residues 34–133 (SVPE…PPMF), 157–242 (ASDA…APVF), 243–350 (DRSL…APQL), 351–455 (TVSS…APLF), 456–565 (AQPE…APTL), and 587–682 (PGQV…SSKV). Cys96 and Cys102 are joined by a disulfide. O-linked (Man) threonine glycosylation is found at Thr223 and Thr225. Asn257 and Asn265 each carry an N-linked (GlcNAc...) asparagine glycan. Thr438 carries an O-linked (Man) threonine glycan. The O-linked (Man) serine glycan is linked to Ser478. Residue Asn548 is glycosylated (N-linked (GlcNAc...) asparagine). A helical membrane pass occupies residues 698–718 (VYLIIAICAVSSLLVLTLLLY). Residues 719–937 (TALRCSATPT…GNSTTDNSDQ (219 aa)) lie on the Cytoplasmic side of the membrane. Disordered stretches follow at residues 755–794 (RQRV…PDWR) and 816–843 (RAGP…EVSP). 5 PXXP repeats span residues 774–777 (PSLP), 786–789 (PRQP), 819–822 (PGGP), 860–863 (PGNP), and 878–881 (PGSP). The tract at residues 774 to 881 (PSLPQGPSST…PDKFIIPGSP (108 aa)) is 5 X 4 AA repeats of P-X-X-P. Polar residues predominate over residues 775 to 787 (SLPQGPSSTDNPR). The segment at 887–937 (RQEPANNQIDKSDFITFGKKEETKKKKKKKKGNKTQEKKEKGNSTTDNSDQ) is disordered. Residues 896-910 (DKSDFITFGKKEETK) are compositionally biased toward basic and acidic residues.

As to quaternary structure, forms homodimers in trans (molecules expressed by two different cells). Forms promiscuous heterodimers in cis (at the plasma membrane of the same cell) with other protocadherins.

The protein localises to the cell membrane. Its function is as follows. Calcium-dependent cell-adhesion protein involved in cells self-recognition and non-self discrimination. Thereby, it is involved in the establishment and maintenance of specific neuronal connections in the brain. The sequence is that of Protocadherin alpha-7 from Mus musculus (Mouse).